Consider the following 616-residue polypeptide: Dihydroxy-acid dehydratase (616 aa).

Asp81 is a Mg(2+) binding site. Cys122 is a [2Fe-2S] cluster binding site. The Mg(2+) site is built by Asp123 and Lys124. Lys124 carries the N6-carboxylysine modification. Residue Cys195 participates in [2Fe-2S] cluster binding. Glu491 serves as a coordination point for Mg(2+). Catalysis depends on Ser517, which acts as the Proton acceptor.

It belongs to the IlvD/Edd family. In terms of assembly, homodimer. [2Fe-2S] cluster serves as cofactor. Requires Mg(2+) as cofactor.

The catalysed reaction is (2R)-2,3-dihydroxy-3-methylbutanoate = 3-methyl-2-oxobutanoate + H2O. It carries out the reaction (2R,3R)-2,3-dihydroxy-3-methylpentanoate = (S)-3-methyl-2-oxopentanoate + H2O. Its pathway is amino-acid biosynthesis; L-isoleucine biosynthesis; L-isoleucine from 2-oxobutanoate: step 3/4. It participates in amino-acid biosynthesis; L-valine biosynthesis; L-valine from pyruvate: step 3/4. Functionally, functions in the biosynthesis of branched-chain amino acids. Catalyzes the dehydration of (2R,3R)-2,3-dihydroxy-3-methylpentanoate (2,3-dihydroxy-3-methylvalerate) into 2-oxo-3-methylpentanoate (2-oxo-3-methylvalerate) and of (2R)-2,3-dihydroxy-3-methylbutanoate (2,3-dihydroxyisovalerate) into 2-oxo-3-methylbutanoate (2-oxoisovalerate), the penultimate precursor to L-isoleucine and L-valine, respectively. The chain is Dihydroxy-acid dehydratase from Salmonella typhi.